A 340-amino-acid polypeptide reads, in one-letter code: Ketol-acid reductoisomerase (NADP(+)) (340 aa).

Residues 1-183 form the KARI N-terminal Rossmann domain; the sequence is MAVTVYYDKD…GAGRTGIIET (183 aa). NADP(+) is bound by residues 26-29, Lys-49, Ser-54, and 84-87; these read FGSQ and DELQ. His-109 is a catalytic residue. Position 135 (Gly-135) interacts with NADP(+). Residues 184-329 form the KARI C-terminal knotted domain; it reads TFKDETETDL…EKLRAMMPWI (146 aa). Residues Asp-192, Glu-196, Glu-228, and Glu-232 each contribute to the Mg(2+) site. Residue Ser-253 participates in substrate binding.

Belongs to the ketol-acid reductoisomerase family. It depends on Mg(2+) as a cofactor.

It carries out the reaction (2R)-2,3-dihydroxy-3-methylbutanoate + NADP(+) = (2S)-2-acetolactate + NADPH + H(+). The enzyme catalyses (2R,3R)-2,3-dihydroxy-3-methylpentanoate + NADP(+) = (S)-2-ethyl-2-hydroxy-3-oxobutanoate + NADPH + H(+). The protein operates within amino-acid biosynthesis; L-isoleucine biosynthesis; L-isoleucine from 2-oxobutanoate: step 2/4. It functions in the pathway amino-acid biosynthesis; L-valine biosynthesis; L-valine from pyruvate: step 2/4. Its function is as follows. Involved in the biosynthesis of branched-chain amino acids (BCAA). Catalyzes an alkyl-migration followed by a ketol-acid reduction of (S)-2-acetolactate (S2AL) to yield (R)-2,3-dihydroxy-isovalerate. In the isomerase reaction, S2AL is rearranged via a Mg-dependent methyl migration to produce 3-hydroxy-3-methyl-2-ketobutyrate (HMKB). In the reductase reaction, this 2-ketoacid undergoes a metal-dependent reduction by NADPH to yield (R)-2,3-dihydroxy-isovalerate. The protein is Ketol-acid reductoisomerase (NADP(+)) of Campylobacter hominis (strain ATCC BAA-381 / DSM 21671 / CCUG 45161 / LMG 19568 / NCTC 13146 / CH001A).